The primary structure comprises 239 residues: 1-(5-phosphoribosyl)-5-[(5-phosphoribosylamino)methylideneamino] imidazole-4-carboxamide isomerase (239 aa).

Asp-8 serves as the catalytic Proton acceptor. Asp-129 serves as the catalytic Proton donor.

The protein belongs to the HisA/HisF family.

Its subcellular location is the cytoplasm. It catalyses the reaction 1-(5-phospho-beta-D-ribosyl)-5-[(5-phospho-beta-D-ribosylamino)methylideneamino]imidazole-4-carboxamide = 5-[(5-phospho-1-deoxy-D-ribulos-1-ylimino)methylamino]-1-(5-phospho-beta-D-ribosyl)imidazole-4-carboxamide. The protein operates within amino-acid biosynthesis; L-histidine biosynthesis; L-histidine from 5-phospho-alpha-D-ribose 1-diphosphate: step 4/9. In Legionella pneumophila (strain Lens), this protein is 1-(5-phosphoribosyl)-5-[(5-phosphoribosylamino)methylideneamino] imidazole-4-carboxamide isomerase.